The sequence spans 337 residues: tRNA N6-adenosine threonylcarbamoyltransferase (337 aa).

Residues His-111 and His-115 each coordinate Fe cation. Residues 134–138 (LVSGG), Asp-167, Gly-180, and Asn-272 each bind substrate. Residue Asp-300 participates in Fe cation binding.

The protein belongs to the KAE1 / TsaD family. Fe(2+) serves as cofactor.

The protein resides in the cytoplasm. The catalysed reaction is L-threonylcarbamoyladenylate + adenosine(37) in tRNA = N(6)-L-threonylcarbamoyladenosine(37) in tRNA + AMP + H(+). In terms of biological role, required for the formation of a threonylcarbamoyl group on adenosine at position 37 (t(6)A37) in tRNAs that read codons beginning with adenine. Is involved in the transfer of the threonylcarbamoyl moiety of threonylcarbamoyl-AMP (TC-AMP) to the N6 group of A37, together with TsaE and TsaB. TsaD likely plays a direct catalytic role in this reaction. This Escherichia coli O157:H7 protein is tRNA N6-adenosine threonylcarbamoyltransferase.